Here is a 147-residue protein sequence, read N- to C-terminus: Large ribosomal subunit protein uL15 (147 aa).

The segment at 1-46 is disordered; the sequence is MSIRLENLSYTPGARKEKHRKGRGHAAGKGKQAGRGQSGQKKRSTV. A compositionally biased stretch (basic residues) spans 16-28; that stretch reads KEKHRKGRGHAAG.

It belongs to the universal ribosomal protein uL15 family. As to quaternary structure, part of the 50S ribosomal subunit.

Binds to the 23S rRNA. This Mesomycoplasma hyopneumoniae (strain J / ATCC 25934 / NCTC 10110) (Mycoplasma hyopneumoniae) protein is Large ribosomal subunit protein uL15.